The following is a 177-amino-acid chain: MSRVGKKPVTVPSGVTATVEGQTVKMKGPKGQLQFVVHDDVDVKFEDGAVKVAPRHETNRARALYGTARAQIANLVEGVTKGFEKKLEITGVGYRAAMQGKKLQLALGYSHDVLYDIPEGITITVPKPTEINVVGIDPQKVGQVAAEIRDYRPPEPYKGKGVRYADEFIFRKEGKKK.

As to quaternary structure, part of the 50S ribosomal subunit.

Its function is as follows. This protein binds to the 23S rRNA, and is important in its secondary structure. It is located near the subunit interface in the base of the L7/L12 stalk, and near the tRNA binding site of the peptidyltransferase center. This chain is Large ribosomal subunit protein uL6, found in Rhodopseudomonas palustris (strain ATCC BAA-98 / CGA009).